Reading from the N-terminus, the 199-residue chain is MYKFCANALKVILSLRGGVKVYNKENLPADSGFVIACTHSGWVDVITLGVGILPYQIHYMAKKELFQNKWIGSFLKKIHAFPVDRENPGPSSIKTPIKLLKEGEIVGIFPSGTRTSEDVPLKRGAVTIAQMGKAPLVPAAYQGPSSGKELFKKGKMKLIIGEPLHQADFAHLPSKERLAAMTEALNQRIKELENKLDQL.

The short motif at His-39–Asp-44 is the HXXXXD motif element.

This sequence belongs to the 1-acyl-sn-glycerol-3-phosphate acyltransferase family.

The protein localises to the cell membrane. The catalysed reaction is a fatty acyl-[ACP] + a 1-acyl-sn-glycero-3-phosphate = a 1,2-diacyl-sn-glycero-3-phosphate + holo-[ACP]. Its pathway is lipid metabolism; phospholipid metabolism. Converts lysophosphatidic acid (LPA) into phosphatidic acid (PA) by incorporating an acyl moiety at the 2 position. This enzyme utilizes acyl-ACP as fatty acyl donor, but not acyl-CoA. This is 1-acyl-sn-glycerol-3-phosphate acyltransferase (plsC) from Bacillus subtilis (strain 168).